Consider the following 257-residue polypeptide: MKPHLLLIDALNLIRRIYAVDANQKHHSDEQMLKASCARVAHACSKLLSSTKATHAIAVFDGDKSWRYHFYKDYKHSRAPMPQILKDALVQFKAAIEETGIVVFEPINDEADDIIATLANKASHNNISSVIVSTDKGFLPFLNEHIAVYDYFKKHYLDQDSIKQRFGVEQKKLVEFWAFAGDKTNDIPGVKGIGTKSAQLLVNNYSSVEDALNDDALSASLRKKLTENMDMYVISKQLVSLRTDINLGFSLKQLRLN.

Asp112 is a Mg(2+) binding site. The 5'-3' exonuclease domain maps to 169 to 256 (EQKKLVEFWA…LGFSLKQLRL (88 aa)). 5 residues coordinate K(+): Phe179, Ala180, Pro188, Val190, and Ile193. The interval 192–197 (GIGTKS) is interaction with DNA.

The protein belongs to the Xni family. Mg(2+) serves as cofactor. Requires K(+) as cofactor.

Has flap endonuclease activity. During DNA replication, flap endonucleases cleave the 5'-overhanging flap structure that is generated by displacement synthesis when DNA polymerase encounters the 5'-end of a downstream Okazaki fragment. The protein is Flap endonuclease Xni of Pseudoalteromonas translucida (strain TAC 125).